The sequence spans 148 residues: UPF0756 membrane protein KPK_3307 (148 aa).

4 helical membrane-spanning segments follow: residues 14–34, 51–71, 86–106, and 121–141; these read ALGF…LIIV, LTVG…SGTL, LLAI…VSLM, and VLGV…AGII.

It belongs to the UPF0756 family.

It localises to the cell membrane. The chain is UPF0756 membrane protein KPK_3307 from Klebsiella pneumoniae (strain 342).